The following is a 458-amino-acid chain: 3-isopropylmalate dehydratase large subunit (458 aa).

Cys337, Cys397, and Cys400 together coordinate [4Fe-4S] cluster.

Belongs to the aconitase/IPM isomerase family. LeuC type 1 subfamily. As to quaternary structure, heterodimer of LeuC and LeuD. Requires [4Fe-4S] cluster as cofactor.

It catalyses the reaction (2R,3S)-3-isopropylmalate = (2S)-2-isopropylmalate. It functions in the pathway amino-acid biosynthesis; L-leucine biosynthesis; L-leucine from 3-methyl-2-oxobutanoate: step 2/4. Its function is as follows. Catalyzes the isomerization between 2-isopropylmalate and 3-isopropylmalate, via the formation of 2-isopropylmaleate. The chain is 3-isopropylmalate dehydratase large subunit from Leuconostoc mesenteroides subsp. mesenteroides (strain ATCC 8293 / DSM 20343 / BCRC 11652 / CCM 1803 / JCM 6124 / NCDO 523 / NBRC 100496 / NCIMB 8023 / NCTC 12954 / NRRL B-1118 / 37Y).